A 310-amino-acid chain; its full sequence is Zinc-finger homeodomain protein 3 (310 aa).

The interval 1–64 (MEIASQEDPI…GLGKNHDHSH (64 aa)) is disordered. A compositionally biased stretch (polar residues) spans 39–56 (LNITTSNPLLVSSNSNGL). The segment at 87-136 (YKECLKNHAATMGGNAIDGCGEFMPSGEEGSIEALTCSVCNCHRNFHRRE) adopts a ZF-HD dimerization-type; degenerate zinc-finger fold. 2 disordered regions span residues 184–220 (TAGSNSESEDLMEEEGGGSLTFRQPPPPPSPYSYGHN) and 281–310 (LSKKSNNVSNNVDLSAGNNDITENLASTNP). A compositionally biased stretch (acidic residues) spans 190–199 (ESEDLMEEEG). The segment at residues 222-285 (KKRFRTKFTQ…NNKQNLSKKS (64 aa)) is a DNA-binding region (homeobox). Over residues 281-291 (LSKKSNNVSNN) the composition is skewed to low complexity. A compositionally biased stretch (polar residues) spans 292–310 (VDLSAGNNDITENLASTNP).

As to quaternary structure, homo- and heterodimer with other ZFHD proteins. Interacts with MIF2 and MIF3; these interactions prevent nuclear localization and DNA-binding to inhibit transcription regulation activity. Binds to ZHD1, ZHD2 and ZHD11. Interacts with HIPP30. Interacts with KIN10, KIN11 and FLZ8. As to expression, mostly expressed in flowers and inflorescence.

The protein localises to the nucleus. Its function is as follows. Putative transcription factor. The sequence is that of Zinc-finger homeodomain protein 3 (ZHD3) from Arabidopsis thaliana (Mouse-ear cress).